The chain runs to 450 residues: Proline--tRNA ligase (450 aa).

Belongs to the class-II aminoacyl-tRNA synthetase family. ProS type 2 subfamily. Homodimer.

Its subcellular location is the cytoplasm. The catalysed reaction is tRNA(Pro) + L-proline + ATP = L-prolyl-tRNA(Pro) + AMP + diphosphate. Functionally, catalyzes the attachment of proline to tRNA(Pro) in a two-step reaction: proline is first activated by ATP to form Pro-AMP and then transferred to the acceptor end of tRNA(Pro). The chain is Proline--tRNA ligase from Paracoccus denitrificans (strain Pd 1222).